A 493-amino-acid chain; its full sequence is Catalase A (493 aa).

Residues 1 to 24 are disordered; that stretch reads MKRKLTGLFGAPVSDRENSMTAGP. Residues His53 and Asn126 contribute to the active site. A heme-binding site is contributed by Tyr336.

Belongs to the catalase family. Homodimer. Heme serves as cofactor.

It catalyses the reaction 2 H2O2 = O2 + 2 H2O. Functionally, decomposes hydrogen peroxide into water and oxygen; serves to protect cells from the toxic effects of hydrogen peroxide. The sequence is that of Catalase A (katA) from Staphylococcus xylosus.